The chain runs to 1016 residues: Primary septum glucan endo-1,3-beta-D-glucosidase (1016 aa).

An N-terminal signal peptide occupies residues 1–20 (MSSYLRSFIFGLLTISLAQC). Residue Asn37 is glycosylated (N-linked (GlcNAc...) asparagine). The beta-sandwich subdomain stretch occupies residues 45–272 (TNVFDSVVDT…NGYIQIAKIP (228 aa)). Residues 45–741 (TNVFDSVVDT…AYAAGLWAND (697 aa)) form the GH81 domain. The alpha/beta subdomain stretch occupies residues 273–364 (LGDGTAEALY…AGNSITFAEA (92 aa)). The tract at residues 379-741 (GQIGYSEEAL…AYAAGLWAND (363 aa)) is (alpha/beta)6 barrel subdomain. The active site involves Asp492. Residues His496, Asp567, Glu569, Glu573, and Tyr650 each coordinate (1,3-beta-D-glucosyl)n. Residues Glu569 and Glu573 contribute to the active site. The tract at residues 748–1016 (SSSSTTTTST…GCSNGALVAA (269 aa)) is required for catalytic activity against insoluble beta-glucan and to restrict localization of the enzyme to the cell septum. The disordered stretch occupies residues 844–872 (SSTTSSITPTPTTTSSITPTPTTTSTTTT).

It belongs to the glycosyl hydrolase 81 family.

It is found in the cell septum. The enzyme catalyses Hydrolysis of (1-&gt;3)-beta-D-glucosidic linkages in (1-&gt;3)-beta-D-glucans.. In terms of biological role, cleaves internal linkages in 1,3-beta-glucan. Has a role in cell separation where it is required for the degradation of the primary septum after completion of cytokinesis. In Schizosaccharomyces pombe (strain 972 / ATCC 24843) (Fission yeast), this protein is Primary septum glucan endo-1,3-beta-D-glucosidase.